The primary structure comprises 1190 residues: DNA-directed RNA polymerase subunit beta (1190 aa).

The segment at 1155 to 1190 (ENFDDDDDHAPDAIMVDVKPAEREEAGEEKDAVTKE) is disordered. The span at 1173-1190 (KPAEREEAGEEKDAVTKE) shows a compositional bias: basic and acidic residues.

Belongs to the RNA polymerase beta chain family. In terms of assembly, the RNAP catalytic core consists of 2 alpha, 1 beta, 1 beta' and 1 omega subunit. When a sigma factor is associated with the core the holoenzyme is formed, which can initiate transcription.

It catalyses the reaction RNA(n) + a ribonucleoside 5'-triphosphate = RNA(n+1) + diphosphate. DNA-dependent RNA polymerase catalyzes the transcription of DNA into RNA using the four ribonucleoside triphosphates as substrates. The sequence is that of DNA-directed RNA polymerase subunit beta from Geobacillus kaustophilus (strain HTA426).